The following is a 696-amino-acid chain: C2 domain-containing protein 2 (696 aa).

A helical transmembrane segment spans residues 8 to 28; the sequence is VQWLFLVSLFVAALGTVGLYL. The SMP-LBD domain occupies 45–238; the sequence is EPDELRRRES…PTQVKEAQSL (194 aa). Ser-54 carries the phosphoserine modification. The region spanning 241-357 is the C2 domain; that stretch reads PSSTAQEPCP…RKQPNGPQTF (117 aa). Position 436 is a phosphoserine (Ser-436). Thr-440 bears the Phosphothreonine mark. Residues 551–611 form a disordered region; the sequence is ATEASATTPP…DGDELSESSL (61 aa). Residues 573–588 show a composition bias toward basic and acidic residues; it reads KPRENDLDSWELEKES. Ser-581 is modified (phosphoserine).

Its subcellular location is the membrane. The chain is C2 domain-containing protein 2 from Mus musculus (Mouse).